A 179-amino-acid chain; its full sequence is 3-hydroxyanthranilate 3,4-dioxygenase 2 (179 aa).

Arg44 contributes to the O2 binding site. Fe cation contacts are provided by His48, Glu60, and His99. Glu60 serves as a coordination point for substrate. The substrate site is built by Arg103 and Glu113.

This sequence belongs to the 3-HAO family. Requires Fe(2+) as cofactor.

It is found in the cytoplasm. The catalysed reaction is 3-hydroxyanthranilate + O2 = (2Z,4Z)-2-amino-3-carboxymuconate 6-semialdehyde. It functions in the pathway cofactor biosynthesis; NAD(+) biosynthesis; quinolinate from L-kynurenine: step 3/3. Functionally, catalyzes the oxidative ring opening of 3-hydroxyanthranilate to 2-amino-3-carboxymuconate semialdehyde, which spontaneously cyclizes to quinolinate. In Aspergillus oryzae (strain ATCC 42149 / RIB 40) (Yellow koji mold), this protein is 3-hydroxyanthranilate 3,4-dioxygenase 2 (bna1-2).